The following is a 313-amino-acid chain: Solute carrier family 35 member E3 (313 aa).

9 consecutive transmembrane segments (helical) span residues 17-37 (GLLF…WIYV), 40-60 (GFPN…GLYI), 71-91 (SLPL…VVFT), 126-146 (FSVR…LNSY), 154-174 (LGMV…VWVG), 187-206 (LLYY…VPFF), 225-245 (LMVL…YWII), 252-272 (TYNM…YILF), and 275-295 (PLSV…LTYT).

This sequence belongs to the TPT transporter family. SLC35E subfamily.

The protein resides in the membrane. In terms of biological role, putative transporter. This chain is Solute carrier family 35 member E3 (Slc35e3), found in Mus musculus (Mouse).